We begin with the raw amino-acid sequence, 273 residues long: Large ribosomal subunit protein uL2 (273 aa).

Disordered regions lie at residues aspartate 35 to isoleucine 54 and glycine 222 to lysine 273. A compositionally biased stretch (polar residues) spans lysine 39–isoleucine 49. Residues aspartate 229–asparagine 239 are compositionally biased toward basic and acidic residues. The span at lysine 253–lysine 273 shows a compositional bias: basic residues.

Belongs to the universal ribosomal protein uL2 family. Part of the 50S ribosomal subunit. Forms a bridge to the 30S subunit in the 70S ribosome.

Its function is as follows. One of the primary rRNA binding proteins. Required for association of the 30S and 50S subunits to form the 70S ribosome, for tRNA binding and peptide bond formation. It has been suggested to have peptidyltransferase activity; this is somewhat controversial. Makes several contacts with the 16S rRNA in the 70S ribosome. This Aeromonas salmonicida (strain A449) protein is Large ribosomal subunit protein uL2.